The sequence spans 302 residues: Large ribosomal subunit protein uL29m (302 aa).

A mitochondrion-targeting transit peptide spans 1-38 (MASSGAARPAASRVLQRCQPFSSSTSCAAPVTTWRTLA). The interval 255–302 (EPVADHLETPETSGQEKVGELSPAGAVDPSTILASKTGKPVTDAPRSS) is disordered.

The protein belongs to the universal ribosomal protein uL29 family. Component of the mitochondrial large ribosomal subunit. Mature mitochondrial ribosomes consist of a small (37S) and a large (54S) subunit. The 37S subunit contains at least 33 different proteins and 1 molecule of RNA (15S). The 54S subunit contains at least 45 different proteins and 1 molecule of RNA (21S).

Its subcellular location is the mitochondrion. This chain is Large ribosomal subunit protein uL29m (MRPL4), found in Pyricularia oryzae (strain 70-15 / ATCC MYA-4617 / FGSC 8958) (Rice blast fungus).